A 75-amino-acid chain; its full sequence is Small ribosomal subunit protein bS18 (75 aa).

This sequence belongs to the bacterial ribosomal protein bS18 family. As to quaternary structure, part of the 30S ribosomal subunit. Forms a tight heterodimer with protein bS6.

In terms of biological role, binds as a heterodimer with protein bS6 to the central domain of the 16S rRNA, where it helps stabilize the platform of the 30S subunit. This chain is Small ribosomal subunit protein bS18, found in Shewanella amazonensis (strain ATCC BAA-1098 / SB2B).